Here is a 556-residue protein sequence, read N- to C-terminus: Formate--tetrahydrofolate ligase (556 aa).

65–72 (TPAGEGKT) contributes to the ATP binding site.

It belongs to the formate--tetrahydrofolate ligase family.

It catalyses the reaction (6S)-5,6,7,8-tetrahydrofolate + formate + ATP = (6R)-10-formyltetrahydrofolate + ADP + phosphate. Its pathway is one-carbon metabolism; tetrahydrofolate interconversion. The protein is Formate--tetrahydrofolate ligase of Alkaliphilus oremlandii (strain OhILAs) (Clostridium oremlandii (strain OhILAs)).